A 330-amino-acid chain; its full sequence is MAPASQSTYQKDERVLCFHHEILYEAKILDVRHTNAEDKKSPFEYLVHYKGWKNTWDDWVPQDRLRKFTDENRELATTLRREAEAAFRQKSTKTTLKRKAGSDRGSARDSEERQTSVPGRVTKRARDNEIEKEEHFYTRPSVRIVMPDNLKSLLVDDWENVTKNQQVVALPAKASVNQILEDFVAEEKPKRTSSADLDVLEEVIMGIKEYFDKALDKILLYRFEREQYKALRKKWEAGSGEYSEKGPLDVYGAEHLTRLFATMPELIAQTNMDLQSTNRLREELSKFTLWLSKNSDKYFATRYMTATNEYVEKSRGNPSAAATAATTRLV.

Residues E13–R66 enclose the Tudor-knot domain. The interval A86–A125 is disordered. A compositionally biased stretch (basic and acidic residues) spans A100–Q114. The MRG domain occupies T138–R315.

Belongs to the MRG family. In terms of assembly, component of the NuA4 histone acetyltransferase complex.

The protein localises to the nucleus. Involved in deacetylation of histones, chromatin assembly and chromosome segregation. May act as a transcriptional oscillator, directing histone deacetylases to specific chromosomal domains. Component of the NuA4 histone acetyltransferase complex which is involved in transcriptional activation of selected genes principally by acetylation of nucleosomal histone H4 and H2A. The NuA4 complex is also involved in DNA repair. This is Chromatin modification-related protein eaf3 (eaf3) from Aspergillus fumigatus (strain ATCC MYA-4609 / CBS 101355 / FGSC A1100 / Af293) (Neosartorya fumigata).